We begin with the raw amino-acid sequence, 352 residues long: D-alanine--D-alanine ligase (352 aa).

The region spanning 133-342 (KTVFAAAGLP…FPKLVDRLIQ (210 aa)) is the ATP-grasp domain. 169–224 (DETIGYPNFVKPANLGSSVGISKVRSRLELEAALDSAASFDRRIVVEAGVVAREVE) provides a ligand contact to ATP. Residues Asp295, Glu309, and Asn311 each contribute to the Mg(2+) site.

The protein belongs to the D-alanine--D-alanine ligase family. The cofactor is Mg(2+). Mn(2+) serves as cofactor.

It localises to the cytoplasm. It carries out the reaction 2 D-alanine + ATP = D-alanyl-D-alanine + ADP + phosphate + H(+). It participates in cell wall biogenesis; peptidoglycan biosynthesis. Its function is as follows. Cell wall formation. The protein is D-alanine--D-alanine ligase of Acaryochloris marina (strain MBIC 11017).